The chain runs to 622 residues: Apical membrane antigen 1 (622 aa).

The signal sequence occupies residues 1–24 (MRKLYCVLLLSAFEFTYMINFGRG). Residues 25-546 (QNYWEHPYQK…EHKPTYDKMK (522 aa)) are Extracellular-facing. Cystine bridges form between cysteine 149–cysteine 302, cysteine 217–cysteine 247, cysteine 263–cysteine 275, cysteine 320–cysteine 418, and cysteine 337–cysteine 409. N-linked (GlcNAc...) asparagine glycosylation is present at asparagine 162. N-linked (GlcNAc...) asparagine glycans are attached at residues asparagine 286, asparagine 371, asparagine 421, asparagine 422, and asparagine 499. 3 cysteine pairs are disulfide-bonded: cysteine 443–cysteine 502, cysteine 490–cysteine 507, and cysteine 492–cysteine 509. Residues 547–567 (IIIASSAAVAVLATILMVYLY) form a helical membrane-spanning segment. Topologically, residues 568–622 (KRKGNAEKYDKMDEPQDYGKSNSRNDEMLDPEASFWGEEKRASHTTPVLMEKPYY) are cytoplasmic. The disordered stretch occupies residues 577–607 (DKMDEPQDYGKSNSRNDEMLDPEASFWGEEK).

It belongs to the apicomplexan parasites AMA1 family.

The protein localises to the membrane. Functionally, involved in parasite invasion of erythrocytes. This Plasmodium falciparum (isolate 7G8) protein is Apical membrane antigen 1 (AMA-1).